Consider the following 141-residue polypeptide: 3-hydroxyacyl-[acyl-carrier-protein] dehydratase FabZ (141 aa).

The active site involves His49.

The protein belongs to the thioester dehydratase family. FabZ subfamily.

Its subcellular location is the cytoplasm. It carries out the reaction a (3R)-hydroxyacyl-[ACP] = a (2E)-enoyl-[ACP] + H2O. In terms of biological role, involved in unsaturated fatty acids biosynthesis. Catalyzes the dehydration of short chain beta-hydroxyacyl-ACPs and long chain saturated and unsaturated beta-hydroxyacyl-ACPs. This Clostridium acetobutylicum (strain ATCC 824 / DSM 792 / JCM 1419 / IAM 19013 / LMG 5710 / NBRC 13948 / NRRL B-527 / VKM B-1787 / 2291 / W) protein is 3-hydroxyacyl-[acyl-carrier-protein] dehydratase FabZ.